A 172-amino-acid polypeptide reads, in one-letter code: Small ribosomal subunit protein uS5 (172 aa).

Positions 17-80 constitute an S5 DRBM domain; that stretch reads FTEKLIKLNR…ERAKRSMVLF (64 aa).

It belongs to the universal ribosomal protein uS5 family. Part of the 30S ribosomal subunit. Contacts proteins S4 and S8.

Its function is as follows. With S4 and S12 plays an important role in translational accuracy. Located at the back of the 30S subunit body where it stabilizes the conformation of the head with respect to the body. In Treponema pallidum (strain Nichols), this protein is Small ribosomal subunit protein uS5.